Reading from the N-terminus, the 338-residue chain is Glycerol-3-phosphate dehydrogenase [NAD(P)+] (338 aa).

NADPH-binding residues include Ser13, Trp14, and Lys108. 3 residues coordinate sn-glycerol 3-phosphate: Lys108, Gly139, and Ser141. Ala143 is an NADPH binding site. 5 residues coordinate sn-glycerol 3-phosphate: Lys194, Asp247, Ser257, Arg258, and Asn259. Lys194 functions as the Proton acceptor in the catalytic mechanism. Arg258 is an NADPH binding site. Val282 and Glu284 together coordinate NADPH.

Belongs to the NAD-dependent glycerol-3-phosphate dehydrogenase family.

The protein localises to the cytoplasm. It catalyses the reaction sn-glycerol 3-phosphate + NAD(+) = dihydroxyacetone phosphate + NADH + H(+). It carries out the reaction sn-glycerol 3-phosphate + NADP(+) = dihydroxyacetone phosphate + NADPH + H(+). Its pathway is membrane lipid metabolism; glycerophospholipid metabolism. Catalyzes the reduction of the glycolytic intermediate dihydroxyacetone phosphate (DHAP) to sn-glycerol 3-phosphate (G3P), the key precursor for phospholipid synthesis. This Streptococcus pneumoniae serotype 19F (strain G54) protein is Glycerol-3-phosphate dehydrogenase [NAD(P)+].